Here is a 145-residue protein sequence, read N- to C-terminus: Large ribosomal subunit protein uL24 (145 aa).

The tract at residues 108-145 is disordered; the sequence is EPIQEEQQKTEETKQEIAPEEVEAKEAQDKQEVKENDQ. Residues 113–145 show a composition bias toward basic and acidic residues; it reads EQQKTEETKQEIAPEEVEAKEAQDKQEVKENDQ.

It belongs to the universal ribosomal protein uL24 family. Part of the 50S ribosomal subunit.

Functionally, one of two assembly initiator proteins, it binds directly to the 5'-end of the 23S rRNA, where it nucleates assembly of the 50S subunit. Its function is as follows. Located at the polypeptide exit tunnel on the outside of the subunit. The polypeptide is Large ribosomal subunit protein uL24 (rpl24) (Thermoplasma volcanium (strain ATCC 51530 / DSM 4299 / JCM 9571 / NBRC 15438 / GSS1)).